We begin with the raw amino-acid sequence, 107 residues long: Nucleoid-associated protein PHZ_c0369 (107 aa).

The protein belongs to the YbaB/EbfC family. Homodimer.

The protein localises to the cytoplasm. The protein resides in the nucleoid. Functionally, binds to DNA and alters its conformation. May be involved in regulation of gene expression, nucleoid organization and DNA protection. The chain is Nucleoid-associated protein PHZ_c0369 from Phenylobacterium zucineum (strain HLK1).